The primary structure comprises 309 residues: Pantothenate kinase (309 aa).

An ATP-binding site is contributed by 92–99; that stretch reads GSVAVGKT.

It belongs to the prokaryotic pantothenate kinase family.

The protein resides in the cytoplasm. It catalyses the reaction (R)-pantothenate + ATP = (R)-4'-phosphopantothenate + ADP + H(+). The protein operates within cofactor biosynthesis; coenzyme A biosynthesis; CoA from (R)-pantothenate: step 1/5. This is Pantothenate kinase (coaA) from Lactiplantibacillus plantarum (strain ATCC BAA-793 / NCIMB 8826 / WCFS1) (Lactobacillus plantarum).